Reading from the N-terminus, the 438-residue chain is Flotillin-2 (438 aa).

Belongs to the band 7/mec-2 family. Flotillin subfamily. In terms of assembly, heterooligomeric complex of flotillins 1 and 2.

The protein resides in the membrane. In terms of biological role, may play a role in axon growth and regeneration. May be involved in epidermal cell adhesion and epidermal structure and function. In Drosophila melanogaster (Fruit fly), this protein is Flotillin-2.